Here is a 240-residue protein sequence, read N- to C-terminus: ATP-dependent Clp protease proteolytic subunit 2 (240 aa).

Catalysis depends on serine 132, which acts as the Nucleophile. Residue histidine 157 is part of the active site.

This sequence belongs to the peptidase S14 family. In terms of assembly, fourteen ClpP subunits assemble into 2 heptameric rings which stack back to back to give a disk-like structure with a central cavity, resembling the structure of eukaryotic proteasomes.

The protein localises to the cytoplasm. It carries out the reaction Hydrolysis of proteins to small peptides in the presence of ATP and magnesium. alpha-casein is the usual test substrate. In the absence of ATP, only oligopeptides shorter than five residues are hydrolyzed (such as succinyl-Leu-Tyr-|-NHMec, and Leu-Tyr-Leu-|-Tyr-Trp, in which cleavage of the -Tyr-|-Leu- and -Tyr-|-Trp bonds also occurs).. In terms of biological role, cleaves peptides in various proteins in a process that requires ATP hydrolysis. Has a chymotrypsin-like activity. Plays a major role in the degradation of misfolded proteins. The polypeptide is ATP-dependent Clp protease proteolytic subunit 2 (Synechococcus elongatus (strain ATCC 33912 / PCC 7942 / FACHB-805) (Anacystis nidulans R2)).